A 360-amino-acid chain; its full sequence is Putative beta-glucosidase 15 (360 aa).

Basic and acidic residues-rich tracts occupy residues 1 to 11 (MARRRMGEEGK) and 47 to 67 (GRRE…ERKG). 2 disordered regions span residues 1–21 (MARR…NGRQ) and 35–103 (GWRS…RAER). The span at 75-86 (GKRRRERRRGGR) shows a compositional bias: basic residues. Tyr-183 is an a beta-D-glucoside binding site. A disulfide bond links Cys-191 and Cys-196. A beta-D-glucoside is bound by residues Glu-254, Trp-301, 308–309 (EW), and Phe-317. Glu-254 (nucleophile) is an active-site residue. Residue Asn-346 is glycosylated (N-linked (GlcNAc...) asparagine).

It belongs to the glycosyl hydrolase 1 family.

It catalyses the reaction Hydrolysis of terminal, non-reducing beta-D-glucosyl residues with release of beta-D-glucose.. In Oryza sativa subsp. japonica (Rice), this protein is Putative beta-glucosidase 15 (BGLU15).